The sequence spans 524 residues: Bifunctional methyltransferase (524 aa).

A hemK region spans residues 1 to 306; that stretch reads MQCSIKQILS…GHSRVILFSP (306 aa). The tract at residues 1-308 is RF MTase; the sequence is MQCSIKQILS…SRVILFSPIN (308 aa). S-adenosyl-L-methionine contacts are provided by residues 146-150, aspartate 169, tryptophan 198, asparagine 213, glutamate 353, glutamate 378, asparagine 405, and aspartate 427; that span reads GTGSG. 213 to 216 is a binding site for substrate; the sequence is NPPY. Residues 307–524 form a tRNA (guanine-N(7)-)-methyltransferase region; the sequence is INLNRSYARR…MILRHVLGDH (218 aa). The tract at residues 311–524 is tRNA MTase; that stretch reads RSYARRIGKS…MILRHVLGDH (214 aa). Aspartate 427 is an active-site residue. The substrate site is built by lysine 431 and aspartate 463.

This sequence in the C-terminal section; belongs to the class I-like SAM-binding methyltransferase superfamily. TrmB family. The protein in the N-terminal section; belongs to the protein N5-glutamine methyltransferase family. PrmC subfamily.

The enzyme catalyses L-glutaminyl-[peptide chain release factor] + S-adenosyl-L-methionine = N(5)-methyl-L-glutaminyl-[peptide chain release factor] + S-adenosyl-L-homocysteine + H(+). The catalysed reaction is guanosine(46) in tRNA + S-adenosyl-L-methionine = N(7)-methylguanosine(46) in tRNA + S-adenosyl-L-homocysteine. Methylates the class 1 translation termination release factors RF1/PrfA and RF2/PrfB on the glutamine residue of the universally conserved GGQ motif. Functionally, catalyzes the formation of N(7)-methylguanine at position 46 (m7G46) in tRNA. In Rickettsia conorii (strain ATCC VR-613 / Malish 7), this protein is Bifunctional methyltransferase (prmC/trmB).